The sequence spans 405 residues: Coiled-coil domain-containing protein 91 (405 aa).

A GGA1-binding motif region spans residues 1–16 (MDDDDFGGFEAAETFD). The tract at residues 1-27 (MDDDDFGGFEAAETFDGGNGETQTTSP) is disordered. Ser-43 and Ser-46 each carry phosphoserine. The stretch at 126-376 (GANVSNIQLR…QKRLDQVIRQ (251 aa)) forms a coiled coil. The interval 210–377 (LSIIVDEYKH…KRLDQVIRQR (168 aa)) is homodimerization.

As to quaternary structure, homodimer. Interacts with GGA1, GGA2 and AP1G1.

Its subcellular location is the membrane. The protein localises to the golgi apparatus. It is found in the trans-Golgi network membrane. The protein resides in the trans-Golgi network. Involved in the regulation of membrane traffic through the trans-Golgi network (TGN). Functions in close cooperation with the GGAs in the sorting of hydrolases to lysosomes. This chain is Coiled-coil domain-containing protein 91 (CCDC91), found in Pongo abelii (Sumatran orangutan).